The sequence spans 163 residues: 2-C-methyl-D-erythritol 2,4-cyclodiphosphate synthase (163 aa).

A divalent metal cation is bound by residues Asp12 and His14. 4-CDP-2-C-methyl-D-erythritol 2-phosphate-binding positions include 12-14 and 38-39; these read DVH and HS. His46 serves as a coordination point for a divalent metal cation. 4-CDP-2-C-methyl-D-erythritol 2-phosphate is bound by residues 60 to 62, 136 to 139, Phe143, and Arg146; these read DIG and TTSE.

The protein belongs to the IspF family. In terms of assembly, homotrimer. The cofactor is a divalent metal cation.

It carries out the reaction 4-CDP-2-C-methyl-D-erythritol 2-phosphate = 2-C-methyl-D-erythritol 2,4-cyclic diphosphate + CMP. Its pathway is isoprenoid biosynthesis; isopentenyl diphosphate biosynthesis via DXP pathway; isopentenyl diphosphate from 1-deoxy-D-xylulose 5-phosphate: step 4/6. In terms of biological role, involved in the biosynthesis of isopentenyl diphosphate (IPP) and dimethylallyl diphosphate (DMAPP), two major building blocks of isoprenoid compounds. Catalyzes the conversion of 4-diphosphocytidyl-2-C-methyl-D-erythritol 2-phosphate (CDP-ME2P) to 2-C-methyl-D-erythritol 2,4-cyclodiphosphate (ME-CPP) with a corresponding release of cytidine 5-monophosphate (CMP). This Xanthomonas oryzae pv. oryzae (strain MAFF 311018) protein is 2-C-methyl-D-erythritol 2,4-cyclodiphosphate synthase.